The following is a 496-amino-acid chain: Xylulose kinase (496 aa).

83–84 provides a ligand contact to substrate; the sequence is MH. Residue aspartate 237 is the Proton acceptor of the active site.

The protein belongs to the FGGY kinase family.

It carries out the reaction D-xylulose + ATP = D-xylulose 5-phosphate + ADP + H(+). Catalyzes the phosphorylation of D-xylulose to D-xylulose 5-phosphate. In Staphylococcus epidermidis (strain ATCC 35984 / DSM 28319 / BCRC 17069 / CCUG 31568 / BM 3577 / RP62A), this protein is Xylulose kinase.